The primary structure comprises 105 residues: Large ribosomal subunit protein uL23 (105 aa).

It belongs to the universal ribosomal protein uL23 family. Part of the 50S ribosomal subunit. Contacts protein L29, and trigger factor when it is bound to the ribosome.

Its function is as follows. One of the early assembly proteins it binds 23S rRNA. One of the proteins that surrounds the polypeptide exit tunnel on the outside of the ribosome. Forms the main docking site for trigger factor binding to the ribosome. The chain is Large ribosomal subunit protein uL23 from Janthinobacterium sp. (strain Marseille) (Minibacterium massiliensis).